A 632-amino-acid chain; its full sequence is Threonine--tRNA ligase (632 aa).

A TGS domain is found at 1–61 (MPIITLPDGT…KTDANLAIIT (61 aa)). A catalytic region spans residues 242 to 533 (DHRKIGKIQD…LIEHYEGAYP (292 aa)). Cys-333, His-384, and His-510 together coordinate Zn(2+).

It belongs to the class-II aminoacyl-tRNA synthetase family. As to quaternary structure, homodimer. It depends on Zn(2+) as a cofactor.

It localises to the cytoplasm. It catalyses the reaction tRNA(Thr) + L-threonine + ATP = L-threonyl-tRNA(Thr) + AMP + diphosphate + H(+). In terms of biological role, catalyzes the attachment of threonine to tRNA(Thr) in a two-step reaction: L-threonine is first activated by ATP to form Thr-AMP and then transferred to the acceptor end of tRNA(Thr). Also edits incorrectly charged L-seryl-tRNA(Thr). The polypeptide is Threonine--tRNA ligase (Ruthia magnifica subsp. Calyptogena magnifica).